We begin with the raw amino-acid sequence, 76 residues long: Conotoxin VnMEKL-012 (76 aa).

A signal peptide spans 1–18; sequence MKLTILFLVAAVLMSTQA. Residues 19 to 42 constitute a propeptide that is removed on maturation; sequence LIQHDGEKSQKAKMKFLTARTLSA. 3 disulfides stabilise this stretch: cysteine 49-cysteine 65, cysteine 56-cysteine 70, and cysteine 64-cysteine 74.

The protein belongs to the conotoxin O2 superfamily. In terms of tissue distribution, expressed by the venom duct.

Its subcellular location is the secreted. In Conus ventricosus (Mediterranean cone), this protein is Conotoxin VnMEKL-012.